A 398-amino-acid polypeptide reads, in one-letter code: Acetate kinase (398 aa).

Residue N10 coordinates Mg(2+). K17 is an ATP binding site. A substrate-binding site is contributed by R91. D148 functions as the Proton donor/acceptor in the catalytic mechanism. Residues 208 to 212 (HLGNG), 283 to 285 (DCR), and 331 to 335 (GIGEN) each bind ATP. E385 contacts Mg(2+).

This sequence belongs to the acetokinase family. As to quaternary structure, homodimer. The cofactor is Mg(2+). Requires Mn(2+) as cofactor.

The protein resides in the cytoplasm. The catalysed reaction is acetate + ATP = acetyl phosphate + ADP. Its pathway is metabolic intermediate biosynthesis; acetyl-CoA biosynthesis; acetyl-CoA from acetate: step 1/2. In terms of biological role, catalyzes the formation of acetyl phosphate from acetate and ATP. Can also catalyze the reverse reaction. In Shewanella woodyi (strain ATCC 51908 / MS32), this protein is Acetate kinase.